We begin with the raw amino-acid sequence, 159 residues long: Phosphopantetheine adenylyltransferase (159 aa).

Ser-9 lines the substrate pocket. ATP is bound by residues 9–10 and His-17; that span reads SF. Lys-41, Leu-73, and Lys-87 together coordinate substrate. Residues 88–90, Glu-98, and 122–128 contribute to the ATP site; these read GLR and YSFLSSS.

Belongs to the bacterial CoaD family. In terms of assembly, homohexamer. The cofactor is Mg(2+).

It localises to the cytoplasm. It carries out the reaction (R)-4'-phosphopantetheine + ATP + H(+) = 3'-dephospho-CoA + diphosphate. It functions in the pathway cofactor biosynthesis; coenzyme A biosynthesis; CoA from (R)-pantothenate: step 4/5. Functionally, reversibly transfers an adenylyl group from ATP to 4'-phosphopantetheine, yielding dephospho-CoA (dPCoA) and pyrophosphate. The protein is Phosphopantetheine adenylyltransferase of Streptomyces avermitilis (strain ATCC 31267 / DSM 46492 / JCM 5070 / NBRC 14893 / NCIMB 12804 / NRRL 8165 / MA-4680).